Consider the following 186-residue polypeptide: ATP synthase subunit delta (186 aa).

Belongs to the ATPase delta chain family. F-type ATPases have 2 components, F(1) - the catalytic core - and F(0) - the membrane proton channel. F(1) has five subunits: alpha(3), beta(3), gamma(1), delta(1), epsilon(1). F(0) has three main subunits: a(1), b(2) and c(10-14). The alpha and beta chains form an alternating ring which encloses part of the gamma chain. F(1) is attached to F(0) by a central stalk formed by the gamma and epsilon chains, while a peripheral stalk is formed by the delta and b chains.

It is found in the cell inner membrane. Its function is as follows. F(1)F(0) ATP synthase produces ATP from ADP in the presence of a proton or sodium gradient. F-type ATPases consist of two structural domains, F(1) containing the extramembraneous catalytic core and F(0) containing the membrane proton channel, linked together by a central stalk and a peripheral stalk. During catalysis, ATP synthesis in the catalytic domain of F(1) is coupled via a rotary mechanism of the central stalk subunits to proton translocation. This protein is part of the stalk that links CF(0) to CF(1). It either transmits conformational changes from CF(0) to CF(1) or is implicated in proton conduction. This is ATP synthase subunit delta from Brucella melitensis biotype 2 (strain ATCC 23457).